The primary structure comprises 109 residues: Phosphoribosyl-ATP pyrophosphatase (109 aa).

The protein belongs to the PRA-PH family.

Its subcellular location is the cytoplasm. It catalyses the reaction 1-(5-phospho-beta-D-ribosyl)-ATP + H2O = 1-(5-phospho-beta-D-ribosyl)-5'-AMP + diphosphate + H(+). It functions in the pathway amino-acid biosynthesis; L-histidine biosynthesis; L-histidine from 5-phospho-alpha-D-ribose 1-diphosphate: step 2/9. The polypeptide is Phosphoribosyl-ATP pyrophosphatase (Geobacter metallireducens (strain ATCC 53774 / DSM 7210 / GS-15)).